The chain runs to 504 residues: Maturase K (504 aa).

Belongs to the intron maturase 2 family. MatK subfamily.

It is found in the plastid. The protein resides in the chloroplast. Its function is as follows. Usually encoded in the trnK tRNA gene intron. Probably assists in splicing its own and other chloroplast group II introns. This chain is Maturase K, found in Quercus lyrata (Overcup oak).